The primary structure comprises 462 residues: Argininosuccinate lyase 2 (462 aa).

This sequence belongs to the lyase 1 family. Argininosuccinate lyase subfamily.

It is found in the cytoplasm. The catalysed reaction is 2-(N(omega)-L-arginino)succinate = fumarate + L-arginine. The protein operates within amino-acid biosynthesis; L-arginine biosynthesis; L-arginine from L-ornithine and carbamoyl phosphate: step 3/3. The polypeptide is Argininosuccinate lyase 2 (Shouchella clausii (strain KSM-K16) (Alkalihalobacillus clausii)).